Consider the following 305-residue polypeptide: Glutaminase (305 aa).

Residues serine 63, asparagine 113, glutamate 158, asparagine 165, tyrosine 189, tyrosine 241, and valine 259 each coordinate substrate.

This sequence belongs to the glutaminase family. As to quaternary structure, homotetramer.

It carries out the reaction L-glutamine + H2O = L-glutamate + NH4(+). The sequence is that of Glutaminase from Aliarcobacter butzleri (strain RM4018) (Arcobacter butzleri).